The sequence spans 329 residues: Synaptonemal complex central element protein 1 (329 aa).

The segment at M1 to Y29 is disordered. Coiled coils occupy residues R54 to L167 and K194 to H294. Residues I291 to T329 form a disordered region. Residues V312 to T329 are compositionally biased toward basic and acidic residues.

Belongs to the SYCE family. As to quaternary structure, homodimer. Found in a complex with SYCP1 and SYCE2. Interacts with SYCP1, SYCE2 and SYCE3. Interacts with SIX6OS1. Meiotic cells (at protein level). Expressed in the ovary and testis.

It is found in the nucleus. The protein resides in the chromosome. Functionally, major component of the transverse central element of synaptonemal complexes (SCS), formed between homologous chromosomes during meiotic prophase. Requires SYCP1 in order to be incorporated into the central element. May have a role in the synaptonemal complex assembly, stabilization and recombination. This chain is Synaptonemal complex central element protein 1 (Syce1), found in Mus musculus (Mouse).